The following is a 490-amino-acid chain: Tegument protein VP16 (490 aa).

The segment at 12-37 (MDADGASPPPPRPAGGPKNTPAAPPL) is disordered. Residues S18, S353, S411, and S452 each carry the phosphoserine modification. The segment at 411 to 490 (STAPPTDVSL…DALGIDEYGG (80 aa)) is transcriptional activation.

It belongs to the herpesviridae tegument protein VP16 protein family. As to quaternary structure, interacts with VP22. Interacts with gH (via C-terminus). Interacts with the virion host shutoff protein (vhs). Interacts with VP11/12. Associates with the VP16-induced complex; binding to host HCFC1 activates VP16 for association with the octamer motif-binding host protein POU2F1, to form a multiprotein-DNA complex responsible for activating transcription of the viral immediate early genes.

The protein resides in the virion tegument. The protein localises to the host nucleus. Its function is as follows. Transcriptional activator of immediate-early (IE) gene products (alpha genes). Acts as a key activator of lytic infection by initiating the lytic program through the assembly of the transcriptional regulatory VP16-induced complex composed of VP16 and two cellular factors, HCFC1 and POU2F 1. VP16-induced complex represents a regulatory switch: when it is on, it promotes IE-gene expression and thus lytic infection, and when it is off, it limits IE-gene transcription favoring latent infection. Functionally, may play a role in the aggregation of tegument proteins around nucleocapsids during virus morphogenesis. In Homo sapiens (Human), this protein is Tegument protein VP16.